A 1248-amino-acid chain; its full sequence is MSKVIGYIDYGDPDGNEEPSKQNGEYIDYSNENGYNAYHSVNGGYDKDNNNHHHHNQEEDYDYDNNTHVNYLTTKHSQFQLSRGRLYQGHQSSHIIYPHQSYKLSNSGESMNRSINQSKEEDHLENSLHDDEYLYGYEDHHDDQASSISQESSQGLDETDFDNIDKYFESNQHLLLQTLQNNNNNNSNSNSNSNSNSNNNNNNNNNNNNNNNNNNNTKNNITDENQLEIHLNDLSIDSDNSNNKINKQYVNSDNSNNNNSNNSNNNNIGSNINSNCNIENEKNSNNTDDNNNNNNIENVNKINIEDNNNNNNNNNNNNNNNNNNNNNNNNNNNNNNNKIEVISNKPIQLFSDYDPPILTTSTSTSQSKIKTQQPFLFFSSNYLNSSSTELDLSEQELNEFPIFDEKEIVQGYKIIDLSFNNIKSIPLDAFTNISNLEQLIMFNNNLSDVPSSIEFLKHLTILDLSHNNLHEICRELGNLSFLRELYLSNNSLKKFPTTGNLYNLKKLILDNNQITTIPIECVEPLIQLQTLDLSFNKIGTITSSTTTTTTTTTTNNNNNNGGGGSIYQKMKNLKQLNLSHNELQEIPSSLRHLSKLHSLSIDYNQISVLPDKVVASLSRLAKLTISNNKIKQLPFAINNLSSLIELNASNNVIELLPDSICYLSNLKKLNLNNNNLKELPSNIGFLTKLVDLQLYNNQISSLPISFLKCRSIREIGTDGNPLPSYYHLGIKAIRYHIKNPDCDLDDLNSISPTIDSSTIEQQQQPIQLFGGGNYIDSSNNNGNESFCNSGELSPLTDSLECIEMPPPMQISENLRKPLNVNSPSYPFQKLDPIPQSLYSSSNPRSHTESDIQKLKNNDETITTTNSSISTTSSPPSLLFGVSINGNGIISTTTTTTTTTTTTNGKTLSRQSSFQQIPQQFNLSTSTTNITKLPRIKYTWEIDFDEIQFFNLIGQGGFSKVYHGVWRSKDVAIKQIELQNNKSLDDFRREVGILSKLKPHENLLAYYGACKHANYCYIITEYLPRGSLHDLLHREQLMKLDFKQKVSFAICVALGCYHLSTYEPPIYHTDLKTKNLLVTNALKIKIADFGLASFAKKSLTTIINNNNNTNNTATSSTTTSSANGANSISNNNNNGTTSVDQSRLAYAFYAAPEILNSKHFSEKSDVFSFGTILWELVTNKIPFDGMDPYEVKELLKSGKRLEIPENCNEVLKNIIQDCWNQQSEDRPTFLSIYHRLENLMKSITKKRRF.

Disordered stretches follow at residues 1–26 (MSKV…NGEY), 40–61 (SVNG…EEDY), 100–125 (QSYK…DHLE), 180–220 (QNNN…TKNN), and 235–338 (SIDS…NNNK). A compositionally biased stretch (polar residues) spans 102 to 117 (YKLSNSGESMNRSINQ). A compositionally biased stretch (low complexity) spans 181-216 (NNNNNNSNSNSNSNSNSNNNNNNNNNNNNNNNNNNN). LRR repeat units follow at residues 386-407 (SSTE…DEKE), 411-432 (GYKI…AFTN), 435-457 (NLEQ…EFLK), 458-480 (HLTI…GNLS), 481-502 (FLRE…GNLY), 503-524 (NLKK…CVEP), 527-548 (QLQT…TTTT), 572-593 (NLKQ…LRHL), 595-616 (KLHS…VVAS), 619-641 (RLAK…NNLS), 642-663 (SLIE…ICYL), 665-687 (NLKK…GFLT), and 688-708 (KLVD…SFLK). Residues 825-873 (YPFQKLDPIPQSLYSSSNPRSHTESDIQKLKNNDETITTTNSSISTTSS) form a disordered region. Basic and acidic residues predominate over residues 845 to 858 (SHTESDIQKLKNND). The span at 860–873 (TITTTNSSISTTSS) shows a compositional bias: low complexity. A Protein kinase domain is found at 946–1239 (IQFFNLIGQG…SIYHRLENLM (294 aa)). ATP contacts are provided by residues 952-960 (IGQGGFSKV) and Lys973. The Proton acceptor role is filled by Asp1069. Positions 1106–1135 (NNTNNTATSSTTTSSANGANSISNNNNNGT) are disordered.

It belongs to the protein kinase superfamily. TKL Ser/Thr protein kinase family.

The catalysed reaction is L-seryl-[protein] + ATP = O-phospho-L-seryl-[protein] + ADP + H(+). The enzyme catalyses L-threonyl-[protein] + ATP = O-phospho-L-threonyl-[protein] + ADP + H(+). This chain is Probable serine/threonine-protein kinase DDB_G0278509, found in Dictyostelium discoideum (Social amoeba).